The primary structure comprises 144 residues: Cell division protein SepF (144 aa).

Positions 16 to 42 are disordered; the sequence is DEMNEAPYTEAEQQEEEVPQAQKNERR.

Belongs to the SepF family. In terms of assembly, homodimer. Interacts with FtsZ.

The protein resides in the cytoplasm. Cell division protein that is part of the divisome complex and is recruited early to the Z-ring. Probably stimulates Z-ring formation, perhaps through the cross-linking of FtsZ protofilaments. Its function overlaps with FtsA. In Lactobacillus gasseri (strain ATCC 33323 / DSM 20243 / BCRC 14619 / CIP 102991 / JCM 1131 / KCTC 3163 / NCIMB 11718 / NCTC 13722 / AM63), this protein is Cell division protein SepF.